The following is a 163-amino-acid chain: ADP-ribosylation factor-like protein 2-binding protein (163 aa).

This sequence belongs to the ARL2BP family. Interacts with GTP bound ARL2 and ARL3; the complex ARL2-ARL2BP as well as ARL2BP alone, binds to SLC25A4/ANT1. Interaction with ARL2 may be required for cilia basal body localization. Interacts with STAT3; interaction is enhanced with ARL2. Found in a complex with ARL2BP, ARL2 and SLC25A6. Found in a complex with ARL2, ARL2BP and SLC25A4. Interacts with STAT2, STAT3 and STAT4.

Its subcellular location is the cytoplasm. The protein localises to the mitochondrion intermembrane space. It is found in the cytoskeleton. It localises to the microtubule organizing center. The protein resides in the centrosome. Its subcellular location is the nucleus. The protein localises to the spindle. It is found in the cilium basal body. Functionally, together with ARL2, plays a role in the nuclear translocation, retention and transcriptional activity of STAT3. May play a role as an effector of ARL2. In Pongo abelii (Sumatran orangutan), this protein is ADP-ribosylation factor-like protein 2-binding protein (ARL2BP).